The primary structure comprises 333 residues: MPPSPAVVGRSLVNSFKQFVSKDLHTRHVDATYRLVLDCVAAVDPLMRLYTFGSTVVYGVHEKGSDVDFVVLNKTDVEDGKGGDAATQVAKGLQADILAKLARVIRQKHLSWNVEEVRRTRVPVVRVKGGGAVDFDITAYRRNGVRNSALLRAYFEQNPPCRWLSMSIKRWSKQTGLNASVIGGSITSYGFNLMVVYYLLQRNHLQFVPPSTIDVSRVEPLPPHLPLEEPADEGLELGTQVLDFLHFFLHEFDSDKQVISLNRPGITTKEELDWTKSAEDFARMNGEKVHYQWCIEDPYELNLNVGRNVTPLKRDFLRRHLEKARDTALLTIV.

UTP-binding positions include Ser-54 and 65–68 (SDVD). Residues Asp-66 and Asp-68 each contribute to the Mg(2+) site. RNA is bound at residue Arg-121. Residues 144 to 148 (GVRNS), Lys-169, Lys-173, and 188 to 189 (SY) contribute to the UTP site. The 66-residue stretch at 237-302 (LGTQVLDFLH…WCIEDPYELN (66 aa)) folds into the PAP-associated domain.

Belongs to the DNA polymerase type-B-like family. Monomer. It depends on Mg(2+) as a cofactor. Requires Mn(2+) as cofactor.

The enzyme catalyses RNA(n) + UTP = RNA(n)-3'-uridine ribonucleotide + diphosphate. The 3' uridylated RNA substrate is involved in the selective incorporation of UTP; UTP binding is favored due to the constraint posed on the positioning of the NTP base by the continuous stacking interactions between Tyr-189 side chain, the bound NTP, and the terminal nucleoside base of the RNA substrate. In terms of biological role, terminal uridylyltransferase which, specifically, catalyzes the addition of Us to the 3'-hydroxyl group of single-stranded RNAs with a 3'-terminal U. This is Terminal uridylyltransferase 4 from Trypanosoma brucei brucei (strain 927/4 GUTat10.1).